The chain runs to 249 residues: Uridylate kinase (249 aa).

An ATP-binding site is contributed by 16–19 (KLSG). Glycine 57 lines the UMP pocket. 2 residues coordinate ATP: glycine 58 and arginine 62. Residues aspartate 77 and 138 to 145 (AGMPYFST) contribute to the UMP site. Residues asparagine 166, tyrosine 172, and aspartate 175 each coordinate ATP.

Belongs to the UMP kinase family. Homohexamer.

It is found in the cytoplasm. It catalyses the reaction UMP + ATP = UDP + ADP. It functions in the pathway pyrimidine metabolism; CTP biosynthesis via de novo pathway; UDP from UMP (UMPK route): step 1/1. Inhibited by UTP. Its function is as follows. Catalyzes the reversible phosphorylation of UMP to UDP. The chain is Uridylate kinase from Bifidobacterium adolescentis (strain ATCC 15703 / DSM 20083 / NCTC 11814 / E194a).